The primary structure comprises 104 residues: uncharacterized protein (104 aa).

The next 2 membrane-spanning stretches (helical) occupy residues 53-73 and 74-94; these read IWGI…NWDF and ILNL…LILI.

It localises to the cell membrane. This is an uncharacterized protein from Methanocaldococcus jannaschii (strain ATCC 43067 / DSM 2661 / JAL-1 / JCM 10045 / NBRC 100440) (Methanococcus jannaschii).